A 351-amino-acid chain; its full sequence is UDP-N-acetylenolpyruvoylglucosamine reductase (351 aa).

The FAD-binding PCMH-type domain occupies 25–196 (HIQAQARWLL…TAVEFRLPLL (172 aa)). Residue Arg173 is part of the active site. The active-site Proton donor is the Ser246. Glu343 is a catalytic residue.

Belongs to the MurB family. It depends on FAD as a cofactor.

The protein resides in the cytoplasm. It catalyses the reaction UDP-N-acetyl-alpha-D-muramate + NADP(+) = UDP-N-acetyl-3-O-(1-carboxyvinyl)-alpha-D-glucosamine + NADPH + H(+). It participates in cell wall biogenesis; peptidoglycan biosynthesis. Functionally, cell wall formation. This is UDP-N-acetylenolpyruvoylglucosamine reductase from Xylella fastidiosa (strain M23).